Consider the following 151-residue polypeptide: Small ribosomal subunit protein uS15 (151 aa).

It belongs to the universal ribosomal protein uS15 family. In terms of assembly, component of the small ribosomal subunit.

It is found in the cytoplasm. Its function is as follows. Component of the small ribosomal subunit. The ribosome is a large ribonucleoprotein complex responsible for the synthesis of proteins in the cell. In Xenopus laevis (African clawed frog), this protein is Small ribosomal subunit protein uS15 (rps13).